The chain runs to 195 residues: MDAASRCDLKVFERLIRKWSPRINLVAPSTYDQTWERHILDSAQLYDFLPSTADKVIDLGSGGGLPVVVLGVLAKHRGCRIKFTAIESDARKCAFLRTAARELQINLSVITSRIEAANVEPGNVITARALAPVSKLLEFAEPLRVAGGTCLFLKGENVQNEVSEAKNSWQFEAKYYPSVTSEKSAILEIGEFYRA.

S-adenosyl-L-methionine contacts are provided by residues Gly60, Leu65, Ile114–Glu115, and Arg128.

This sequence belongs to the methyltransferase superfamily. RNA methyltransferase RsmG family.

It is found in the cytoplasm. The enzyme catalyses guanosine(527) in 16S rRNA + S-adenosyl-L-methionine = N(7)-methylguanosine(527) in 16S rRNA + S-adenosyl-L-homocysteine. Its function is as follows. Specifically methylates the N7 position of guanine in position 527 of 16S rRNA. The chain is Ribosomal RNA small subunit methyltransferase G from Dinoroseobacter shibae (strain DSM 16493 / NCIMB 14021 / DFL 12).